A 108-amino-acid polypeptide reads, in one-letter code: UPF0060 membrane protein BLi00854/BL03049 (108 aa).

4 consecutive transmembrane segments (helical) span residues 3–23 (IAIG…YLVW), 31–51 (PLWY…IPAF), 60–80 (VYAA…WLVD), and 86–106 (LYDW…LWAP).

This sequence belongs to the UPF0060 family.

Its subcellular location is the cell membrane. This is UPF0060 membrane protein BLi00854/BL03049 from Bacillus licheniformis (strain ATCC 14580 / DSM 13 / JCM 2505 / CCUG 7422 / NBRC 12200 / NCIMB 9375 / NCTC 10341 / NRRL NRS-1264 / Gibson 46).